We begin with the raw amino-acid sequence, 346 residues long: Envelope glycoprotein M (346 aa).

The Intravirion portion of the chain corresponds to 1-12; sequence MALSRVDVINMR. The chain crosses the membrane as a helical span at residues 13 to 33; sequence IWVLSIICACLTYVNVTVHLV. The Virion surface portion of the chain corresponds to 34 to 76; the sequence is AVHFPNLGFPCAYYEINDMKAINLSIRNDIRSLTPQLYLNPIQ. Residues 77–97 traverse the membrane as a helical segment; sequence LICYVVFMDICFFFILVYYIV. Residues 98 to 117 lie on the Intravirion side of the membrane; that stretch reads CCVKVFSSEKTPNINQSTRD. The helical transmembrane segment at 118–140 threads the bilayer; sequence ITWMGDSLSCFQFVLTMDTYQFF. At 141 to 147 the chain is on the virion surface side; that stretch reads VTCLSFR. A helical transmembrane segment spans residues 148–168; the sequence is LVTLAAFTYCLFFICFTAFTL. Topologically, residues 169–199 are intravirion; that stretch reads TMITQYQSSERSFFVLKRIHPKLKGTIKYKT. The chain crosses the membrane as a helical span at residues 200 to 220; sequence IIINMIELMLGFSSMVFAITI. Topologically, residues 221-236 are virion surface; it reads CLGLGNNFYIKSSTVA. A helical transmembrane segment spans residues 237 to 257; the sequence is FASINTFFVMSFVYSLVIELI. Over 258–263 the chain is Intravirion; it reads LHQYVK. Residues 264-284 form a helical membrane-spanning segment; the sequence is VQFGLHFGILFGILGLTYPIL. Topologically, residues 285–293 are virion surface; the sequence is KYDSLFKTE. The chain crosses the membrane as a helical span at residues 294-314; the sequence is WTVKFIVNLAVITIVCLSFII. Over 315 to 346 the chain is Intravirion; that stretch reads CRLIRFFMRKHHNYKKLPTTVEDLDVLEEANE.

It belongs to the herpesviridae glycoprotein M family. In terms of assembly, interacts (via N-terminus) with gN (via N-terminus). The gM-gN heterodimer forms the gCII complex.

Its subcellular location is the virion membrane. It localises to the host Golgi apparatus. It is found in the host trans-Golgi network. The protein localises to the host endosome membrane. The protein resides in the host nucleus inner membrane. Functionally, envelope glycoprotein important for virion assembly and egress. Plays a role in the correct incorporation of gH-gL into virion membrane. Directs the glycoprotein N (gN) to the host trans-Golgi network. The polypeptide is Envelope glycoprotein M (Homo sapiens (Human)).